The chain runs to 392 residues: 8-amino-7-oxononanoate synthase (392 aa).

108–109 (GF) provides a ligand contact to pyridoxal 5'-phosphate. H133 is a binding site for substrate. Residues S180, 205–208 (DDAH), and 236–239 (TLSK) each bind pyridoxal 5'-phosphate. K239 bears the N6-(pyridoxal phosphate)lysine mark. T353 contacts substrate.

Belongs to the class-II pyridoxal-phosphate-dependent aminotransferase family. BioF subfamily. As to quaternary structure, homodimer. Pyridoxal 5'-phosphate serves as cofactor.

It carries out the reaction 6-carboxyhexanoyl-[ACP] + L-alanine + H(+) = (8S)-8-amino-7-oxononanoate + holo-[ACP] + CO2. The protein operates within cofactor biosynthesis; biotin biosynthesis. In terms of biological role, catalyzes the decarboxylative condensation of pimeloyl-[acyl-carrier protein] and L-alanine to produce 8-amino-7-oxononanoate (AON), [acyl-carrier protein], and carbon dioxide. This Bacillus pumilus (strain SAFR-032) protein is 8-amino-7-oxononanoate synthase.